A 101-amino-acid chain; its full sequence is uncharacterized protein (101 aa).

A helical transmembrane segment spans residues 17-37; sequence VIKILLISGISRIIILILAMF.

The protein localises to the endoplasmic reticulum membrane. This is an uncharacterized protein from Schizosaccharomyces pombe (strain 972 / ATCC 24843) (Fission yeast).